The sequence spans 423 residues: MSKASTFSAPKGIPDYVPPQSAEFVAVRDGLTRAARLAGYGHIELPIFEDTGLFARGVGESTDVVSKEMYTFADRGDRSVTLRPEGTAGVMRAVIEHSLDRGQLPVKVSYAGPFFRYERPQAGRYRQLQQVGVEAIGIDDPALDAEVIAIADAGFRSLGLDGFRLEITSLGDDTCRPQYRELLQEFLFALPLDEDTRRRAEINPLRVLDDKRPDVREMTAGAPLMLDHLSESCKAHFDEVLAHLDALGVPYVVNPRMVRGLDYYTKTTFEFVHDGLGAQSGIGGGGRYDGLMEQLGGQPLSGIGFGIGVDRTVLALEAEGKSVAPPARVDVFCVPMGAEAKAALVKIAHQLRANGIRVDLAYGNRGVKGSMKAADRSGAAVALVLGERELEEGVVVVKQLATGEQETVPLDQVVDKLGDLVEH.

The protein belongs to the class-II aminoacyl-tRNA synthetase family. As to quaternary structure, homodimer.

It localises to the cytoplasm. It catalyses the reaction tRNA(His) + L-histidine + ATP = L-histidyl-tRNA(His) + AMP + diphosphate + H(+). This is Histidine--tRNA ligase from Rhodococcus erythropolis (strain PR4 / NBRC 100887).